Consider the following 358-residue polypeptide: Trans-enoyl reductase pvhC (358 aa).

Val48–Lys51 contributes to the NADP(+) binding site. Ile134–Leu141 serves as a coordination point for substrate. NADP(+) is bound by residues Ser169–Cys172, Ser192–Asn195, Tyr210, and Leu257–Glu258. Gly278–Leu282 contacts substrate. Val347–Ser348 is an NADP(+) binding site.

Belongs to the zinc-containing alcohol dehydrogenase family. As to quaternary structure, monomer.

It participates in secondary metabolite biosynthesis. Trans-enoyl reductase; part of the gene cluster that mediates the biosynthesis of varicidin A, an antifungal natural product containing a cis-octahydrodecalin core. The PKS module of pvhA together with the enoylreductase pvhC catalyze the formation of the polyketide unit which is then conjugated to L-isoleucine by the condensation domain of the NRPS module. Activity of the Dieckmann cyclase domain (RED) of pvhA results in release of an acyclic tetramate. The cytochrome P450 monooxygenase pvhE then catalyzes the oxidation of the C21 methyl group to a to carboxylate group. The methyltransferase pvhD then further methylates the pvhE product. The Diels-Alderase pvhB is able to catalyze Diels-Alder cycloaddition using both pvhE and pvhD products as substrates to form the decalin ring, yielding varicidin B and A, respectively. The polypeptide is Trans-enoyl reductase pvhC (Talaromyces variabilis (Penicillium variabile)).